We begin with the raw amino-acid sequence, 372 residues long: NADH-quinone oxidoreductase subunit H (372 aa).

8 helical membrane-spanning segments follow: residues 34–54, 106–126, 139–159, 178–198, 217–237, 269–289, 313–333, and 352–372; these read LPLGLLVIAAIPLVFIALYAL, FLFVIGPGVLFVGSFLAFAVL, VGLFYAIGIVALEVVGILAAG, IVSYEIPAAIALLCGAMMAGT, FFLFQSPIAWLPFLIYFIASL, VIFLAEYGSMFMVSAIIAIVF, VWGAFWIIMKGFFFIFVQMWL, and VLTPFAFVSFVLTAIWMIYVP.

Belongs to the complex I subunit 1 family. As to quaternary structure, NDH-1 is composed of 14 different subunits. Subunits NuoA, H, J, K, L, M, N constitute the membrane sector of the complex.

The protein localises to the cell inner membrane. It carries out the reaction a quinone + NADH + 5 H(+)(in) = a quinol + NAD(+) + 4 H(+)(out). Its function is as follows. NDH-1 shuttles electrons from NADH, via FMN and iron-sulfur (Fe-S) centers, to quinones in the respiratory chain. The immediate electron acceptor for the enzyme in this species is believed to be ubiquinone. Couples the redox reaction to proton translocation (for every two electrons transferred, four hydrogen ions are translocated across the cytoplasmic membrane), and thus conserves the redox energy in a proton gradient. This subunit may bind ubiquinone. The polypeptide is NADH-quinone oxidoreductase subunit H (Chlorobium luteolum (strain DSM 273 / BCRC 81028 / 2530) (Pelodictyon luteolum)).